A 256-amino-acid chain; its full sequence is Small ribosomal subunit protein eS1 (256 aa).

Alanine 2 is modified (N-acetylalanine; partial).

This sequence belongs to the eukaryotic ribosomal protein eS1 family. Component of the small ribosomal subunit. Mature ribosomes consist of a small (40S) and a large (60S) subunit. The 40S subunit contains about 33 different proteins and 1 molecule of RNA (18S). The 60S subunit contains about 49 different proteins and 3 molecules of RNA (25S, 5.8S and 5S).

It localises to the cytoplasm. In Laccaria bicolor (strain S238N-H82 / ATCC MYA-4686) (Bicoloured deceiver), this protein is Small ribosomal subunit protein eS1.